A 130-amino-acid chain; its full sequence is Small ribosomal subunit protein uS8 (130 aa).

This sequence belongs to the universal ribosomal protein uS8 family.

The sequence is that of Small ribosomal subunit protein uS8 (RPS22A) from Eremothecium gossypii (strain ATCC 10895 / CBS 109.51 / FGSC 9923 / NRRL Y-1056) (Yeast).